Here is a 148-residue protein sequence, read N- to C-terminus: NADH-quinone oxidoreductase subunit A (148 aa).

3 helical membrane-spanning segments follow: residues 14 to 34, 68 to 88, and 98 to 118; these read WAFA…LVGG, FYLV…LYAW, and VGFV…VYLV.

The protein belongs to the complex I subunit 3 family. As to quaternary structure, NDH-1 is composed of 13 different subunits. Subunits NuoA, H, J, K, L, M, N constitute the membrane sector of the complex.

The protein resides in the cell inner membrane. It carries out the reaction a quinone + NADH + 5 H(+)(in) = a quinol + NAD(+) + 4 H(+)(out). NDH-1 shuttles electrons from NADH, via FMN and iron-sulfur (Fe-S) centers, to quinones in the respiratory chain. The immediate electron acceptor for the enzyme in this species is believed to be ubiquinone. Couples the redox reaction to proton translocation (for every two electrons transferred, four hydrogen ions are translocated across the cytoplasmic membrane), and thus conserves the redox energy in a proton gradient. This chain is NADH-quinone oxidoreductase subunit A, found in Klebsiella pneumoniae subsp. pneumoniae (strain ATCC 700721 / MGH 78578).